The primary structure comprises 489 residues: Putative general negative regulator of transcription C16C9.04c (489 aa).

The RING-type zinc finger occupies 18–61 (CPLCMEEIDISDKNFKPCQCGYRVCRFCWHHIKEDLNGRCPACR). The stretch at 76 to 109 (AEEWKMDLHRKNERKKREKERKEVELSNRKHLAN) forms a coiled coil. Residues 116–198 (NLAYVNGLSP…VSDGRHLRAS (83 aa)) enclose the RRM domain. The C3H1-type zinc finger occupies 199–226 (YGTTKYCTSYLRNQQCPNPSCMYLHEPG). 2 stretches are compositionally biased toward polar residues: residues 246–261 (LSTK…HSPS) and 466–479 (ENQP…NNGN). Disordered regions lie at residues 246–268 (LSTK…PFKT) and 458–489 (VPEQ…GFQS).

Its subcellular location is the nucleus. May negatively regulate the basal and activated transcription of many genes. This chain is Putative general negative regulator of transcription C16C9.04c, found in Schizosaccharomyces pombe (strain 972 / ATCC 24843) (Fission yeast).